We begin with the raw amino-acid sequence, 142 residues long: Putative pre-16S rRNA nuclease (142 aa).

Belongs to the YqgF nuclease family.

It localises to the cytoplasm. In terms of biological role, could be a nuclease involved in processing of the 5'-end of pre-16S rRNA. The protein is Putative pre-16S rRNA nuclease of Lactobacillus helveticus (strain DPC 4571).